Reading from the N-terminus, the 239-residue chain is Proteasome activator complex subunit 2 (239 aa).

Position 2 is an N-acetylalanine (Ala-2). At Ser-10 the chain carries Phosphoserine. The tract at residues 65–87 (DIPIPDPPPKDDEMETDKQEKKE) is disordered. Residues 72–87 (PPKDDEMETDKQEKKE) are compositionally biased toward basic and acidic residues.

This sequence belongs to the PA28 family. In terms of assembly, heterodimer of PSME1 and PSME2, which forms a hexameric ring.

In terms of biological role, implicated in immunoproteasome assembly and required for efficient antigen processing. The PA28 activator complex enhances the generation of class I binding peptides by altering the cleavage pattern of the proteasome. This is Proteasome activator complex subunit 2 (Psme2) from Mus musculus (Mouse).